A 501-amino-acid polypeptide reads, in one-letter code: Pentatricopeptide repeat-containing protein At2g36730 (501 aa).

9 PPR repeats span residues Thr77–Pro111, Asn112–Phe146, Asp147–Arg177, Asn178–Pro212, Asp213–Leu243, Asn246–Lys276, Asn277–Pro312, Asn313–Ile343, and Met349–Glu379. Residues Val384–Gly462 form a type E motif region. The interval Gly463 to Thr493 is type E(+) motif.

Belongs to the PPR family. PCMP-E subfamily.

The sequence is that of Pentatricopeptide repeat-containing protein At2g36730 (PCMP-E44) from Arabidopsis thaliana (Mouse-ear cress).